The primary structure comprises 473 residues: Photosystem II CP43 reaction center protein (473 aa).

Residues 1-14 (MKTLYSLRRFYPVE) constitute a propeptide that is removed on maturation. An N-acetylthreonine modification is found at Thr-15. A Phosphothreonine modification is found at Thr-15. The next 5 helical transmembrane spans lie at 69–93 (LFEV…PHLA), 134–155 (LLGP…KDRN), 178–200 (KALS…RKIT), 255–275 (KPFA…LSYS), and 291–312 (WFNN…ASQA). Residue Glu-367 participates in [CaMn4O5] cluster binding. A helical membrane pass occupies residues 447–471 (RARAAAAGFEKGIDRDFEPVLSMTP).

This sequence belongs to the PsbB/PsbC family. PsbC subfamily. PSII is composed of 1 copy each of membrane proteins PsbA, PsbB, PsbC, PsbD, PsbE, PsbF, PsbH, PsbI, PsbJ, PsbK, PsbL, PsbM, PsbT, PsbX, PsbY, PsbZ, Psb30/Ycf12, at least 3 peripheral proteins of the oxygen-evolving complex and a large number of cofactors. It forms dimeric complexes. Binds multiple chlorophylls and provides some of the ligands for the Ca-4Mn-5O cluster of the oxygen-evolving complex. It may also provide a ligand for a Cl- that is required for oxygen evolution. PSII binds additional chlorophylls, carotenoids and specific lipids. is required as a cofactor.

It is found in the plastid. The protein resides in the chloroplast thylakoid membrane. Its function is as follows. One of the components of the core complex of photosystem II (PSII). It binds chlorophyll and helps catalyze the primary light-induced photochemical processes of PSII. PSII is a light-driven water:plastoquinone oxidoreductase, using light energy to abstract electrons from H(2)O, generating O(2) and a proton gradient subsequently used for ATP formation. This Pelargonium hortorum (Common geranium) protein is Photosystem II CP43 reaction center protein.